The chain runs to 154 residues: Avirulence protein ATR13 (154 aa).

The signal sequence occupies residues 1-19; it reads MRLVHAVLLPGIIVFVSNG. Residues 38 to 41 carry the RxLR motif; that stretch reads RQLR. The tract at residues 50–92 is leucine heptad repeat region; the sequence is LSRASFGLGKAQDPLDKFFSKIIFSGKPIETSYSAKGIHEKII. The segment at 93–103 is single repeat region; the sequence is EAHDLHVSKSK. Residues 104–154 form a highly variable C-terminus domain region; the sequence is NAPIQYASVMEYLKKTYPGPDIERIVSTLERHDEVGAKDLGAKLRDALDRQ.

It belongs to the RxLR effector family.

Its subcellular location is the secreted. The protein localises to the host cytoplasm. In terms of biological role, secreted effector that acts as an elicitor of hypersensitive response (HR) specifically on plants carrying defense protein RPP13. Recognition of ATR13 by RPP13 initiates defense responses that are effective against oomycete, bacterial and viral pathogens. The allele ATR13-Emco5 recognizes RPP13-Nd, the RPP13 defense protein from Arabidopsis thaliana ecotype Niederzenz. This is Avirulence protein ATR13 from Hyaloperonospora arabidopsidis (Peronospora arabidopsidis).